A 248-amino-acid polypeptide reads, in one-letter code: 4-hydroxy-tetrahydrodipicolinate reductase (248 aa).

NAD(+) is bound by residues 74–76 and 99–102; these read GTT and SANF. His134 (proton donor/acceptor) is an active-site residue. His135 provides a ligand contact to (S)-2,3,4,5-tetrahydrodipicolinate. Lys138 (proton donor) is an active-site residue. Position 144-145 (144-145) interacts with (S)-2,3,4,5-tetrahydrodipicolinate; it reads GT.

This sequence belongs to the DapB family.

The protein resides in the cytoplasm. The enzyme catalyses (S)-2,3,4,5-tetrahydrodipicolinate + NAD(+) + H2O = (2S,4S)-4-hydroxy-2,3,4,5-tetrahydrodipicolinate + NADH + H(+). The catalysed reaction is (S)-2,3,4,5-tetrahydrodipicolinate + NADP(+) + H2O = (2S,4S)-4-hydroxy-2,3,4,5-tetrahydrodipicolinate + NADPH + H(+). The protein operates within amino-acid biosynthesis; L-lysine biosynthesis via DAP pathway; (S)-tetrahydrodipicolinate from L-aspartate: step 4/4. In terms of biological role, catalyzes the conversion of 4-hydroxy-tetrahydrodipicolinate (HTPA) to tetrahydrodipicolinate. The sequence is that of 4-hydroxy-tetrahydrodipicolinate reductase from Chlorobium phaeobacteroides (strain DSM 266 / SMG 266 / 2430).